The following is a 206-amino-acid chain: MTDSNGPKDNNQDQAQAAADPVVSKPYIMPDDPEDGANEALIKEAAEARDKMLRTLAEMENLRRRTQKEVADARTYGVSAFARDVLEIADNLQRALDAVPAEARANADAGLKGLIEGVELTERSLINALEKNGVRKFDPSGEKFDPNFQQAMYEVPDPSVPAGTVVQVVQAGFMIGERVLRPALVGVAKGGAKPAPAATNGTDTTA.

The segment at Met1–Gly36 is disordered.

Belongs to the GrpE family. Homodimer.

The protein localises to the cytoplasm. Its function is as follows. Participates actively in the response to hyperosmotic and heat shock by preventing the aggregation of stress-denatured proteins, in association with DnaK and GrpE. It is the nucleotide exchange factor for DnaK and may function as a thermosensor. Unfolded proteins bind initially to DnaJ; upon interaction with the DnaJ-bound protein, DnaK hydrolyzes its bound ATP, resulting in the formation of a stable complex. GrpE releases ADP from DnaK; ATP binding to DnaK triggers the release of the substrate protein, thus completing the reaction cycle. Several rounds of ATP-dependent interactions between DnaJ, DnaK and GrpE are required for fully efficient folding. The sequence is that of Protein GrpE from Rhodopseudomonas palustris (strain HaA2).